The sequence spans 355 residues: Trans-3-hydroxy-L-proline dehydratase (355 aa).

The Proton acceptor role is filled by Cys111. Substrate contacts are provided by residues 112–113 (GH) and 276–277 (GS).

Belongs to the proline racemase family. As to quaternary structure, homodimer.

It catalyses the reaction trans-3-hydroxy-L-proline = 1-pyrroline-2-carboxylate + H2O. In terms of biological role, catalyzes the dehydration of trans-3-hydroxy-L-proline (t3LHyp) to Delta(1)-pyrroline-2-carboxylate (Pyr2C). Together with LhpI, is involved in a metabolic pathway that converts t3LHyp to L-proline. This chain is Trans-3-hydroxy-L-proline dehydratase, found in Colwellia psychrerythraea (strain 34H / ATCC BAA-681) (Vibrio psychroerythus).